A 246-amino-acid chain; its full sequence is Virulence plasmid protein pGP6-D (246 aa).

Belongs to the UPF0137 (pGP6-D) family.

This chain is Virulence plasmid protein pGP6-D, found in Chlamydia muridarum (strain MoPn / Nigg).